The primary structure comprises 189 residues: UPF0301 protein HRM2_24640 (189 aa).

This sequence belongs to the UPF0301 (AlgH) family.

The protein is UPF0301 protein HRM2_24640 of Desulforapulum autotrophicum (strain ATCC 43914 / DSM 3382 / VKM B-1955 / HRM2) (Desulfobacterium autotrophicum).